The sequence spans 360 residues: Mannose-1-phosphate guanylyltransferase catalytic subunit beta (360 aa).

The tract at residues 2-222 is substrate-binding domain; the sequence is KALILVGGYG…QGFWMDIGQP (221 aa). A GDP-alpha-D-mannose-binding site is contributed by Asp-110. Asp-110 lines the Mg(2+) pocket. Residue Lys-162 is part of the active site. Asp-218 provides a ligand contact to GDP-alpha-D-mannose. Asp-218 is a Mg(2+) binding site. The interval 245–360 is hexapeptide repeat domain; that stretch reads RAGPGFLGNV…DSVPEPRIIM (116 aa).

The protein belongs to the transferase hexapeptide repeat family. As to quaternary structure, component of the GMPPA-GMPPB mannose-1-phosphate guanylyltransferase complex composed of 4 gmppa subunits and 8 gmppb subunits; the complex is organized into three layers, a central layer made up of 2 gmppa dimers sandwiched between two layers each made up of 2 gmppb dimers. Catalytic activity of gmppb is reduced when part of the complex and binding of GDP-alpha-D-Mannose by gmppa induces allosteric feedback inhibition of gmppb. Mg(2+) is required as a cofactor.

It catalyses the reaction alpha-D-mannose 1-phosphate + GTP + H(+) = GDP-alpha-D-mannose + diphosphate. It participates in nucleotide-sugar biosynthesis; GDP-alpha-D-mannose biosynthesis; GDP-alpha-D-mannose from alpha-D-mannose 1-phosphate (GTP route): step 1/1. Enzyme activity is reduced by incorporation into the GMPPA-GMPPB mannose-1-phosphate guanylyltransferase complex. Allosterically inhibited, when part of the GMPPA-GMPPB complex, by GDP-alpha-D-mannose binding to GMPPA. Functionally, catalytic subunit of the GMPPA-GMPPB mannose-1-phosphate guanylyltransferase complex. Catalyzes the formation of GDP-mannose, an essential precursor of glycan moieties of glycoproteins and glycolipids. Can catalyze the reverse reaction in vitro. Together with GMPPA regulates GDP-alpha-D-mannose levels. This is Mannose-1-phosphate guanylyltransferase catalytic subunit beta (gmppb) from Danio rerio (Zebrafish).